The following is a 283-amino-acid chain: MGRRAPDRLDRGVTTTSPRTQAPPQAGRGVHATARIRATSHDGVTVLPLLRSDGPFHLRQLRNHGSQARVCVVSAMSAPLGGDRLAIDVSVEAGAQLEITTAAATLALRGATTDHATYDVTLTVGEQATLYWLPQPLISTRGSNLRQTYTVDLAPTARLILREELILGRAHEPPGDLSSHLTVHRDGRPLLAQHTTFGSTAPGWDGPAVLGEHRATGQILIVDPAFANAPPATRLLGDEPANGEGIVAPLAGPAVLATALAPTATPLRHLLDDAVRPRTPCST.

Residues 1–11 show a composition bias toward basic and acidic residues; the sequence is MGRRAPDRLDR. The segment at 1–30 is disordered; sequence MGRRAPDRLDRGVTTTSPRTQAPPQAGRGV. The segment covering 13–23 has biased composition (polar residues); it reads VTTTSPRTQAP.

Belongs to the UreD family. In terms of assembly, ureD, UreF and UreG form a complex that acts as a GTP-hydrolysis-dependent molecular chaperone, activating the urease apoprotein by helping to assemble the nickel containing metallocenter of UreC. The UreE protein probably delivers the nickel.

The protein localises to the cytoplasm. Required for maturation of urease via the functional incorporation of the urease nickel metallocenter. The sequence is that of Urease accessory protein UreD 2 from Saccharopolyspora erythraea (strain ATCC 11635 / DSM 40517 / JCM 4748 / NBRC 13426 / NCIMB 8594 / NRRL 2338).